Here is a 741-residue protein sequence, read N- to C-terminus: 1,4-alpha-glucan branching enzyme GlgB (741 aa).

Residue aspartate 420 is the Nucleophile of the active site. The active-site Proton donor is glutamate 473.

It belongs to the glycosyl hydrolase 13 family. GlgB subfamily. In terms of assembly, monomer.

It carries out the reaction Transfers a segment of a (1-&gt;4)-alpha-D-glucan chain to a primary hydroxy group in a similar glucan chain.. Its pathway is glycan biosynthesis; glycogen biosynthesis. Catalyzes the formation of the alpha-1,6-glucosidic linkages in glycogen by scission of a 1,4-alpha-linked oligosaccharide from growing alpha-1,4-glucan chains and the subsequent attachment of the oligosaccharide to the alpha-1,6 position. This is 1,4-alpha-glucan branching enzyme GlgB from Pseudomonas syringae pv. syringae (strain B728a).